A 309-amino-acid chain; its full sequence is Taste receptor type 2 member 114 (309 aa).

The Extracellular segment spans residues 1-7 (MLSTMEG). Residues 8–28 (VLLSVSTSEAVLGIVGNTFIA) form a helical membrane-spanning segment. At 29–43 (LVNCMDYNRNKKLSN) the chain is on the cytoplasmic side. Residues 44 to 64 (IGFILTGLAISRICLVLILIT) form a helical membrane-spanning segment. The Extracellular segment spans residues 65-87 (EAYIKIFYPQLLSPVNIIELISY). A helical transmembrane segment spans residues 88-108 (LWIIICQLNVWFATSLSIFYF). Residues 109–127 (LKIANFSHYIFVWLKRRID) are Cytoplasmic-facing. A helical transmembrane segment spans residues 128–148 (LVFFFLIGCLLISWLFSFPVV). Over 149-182 (AKMVKDNKMLYINTSWQIHMKKSELIINYVFTNG) the chain is Extracellular. A glycan (N-linked (GlcNAc...) asparagine) is linked at Asn161. The chain crosses the membrane as a helical span at residues 183 to 203 (GVFLFFMIMLIVCFLLIISLW). Over 204 to 233 (RHRRQMESNKLGFRDLNTEVHVRTIKVLLS) the chain is Cytoplasmic. A helical membrane pass occupies residues 234 to 254 (FIILFILHFMGITINVICLLI). The Extracellular segment spans residues 255-259 (PESNL). A helical membrane pass occupies residues 260 to 280 (LFMFGLTTAFIYPGCHSLILI). Residues 281 to 309 (LANSRLKQCSVMILQLLKCCENGKELRDT) are Cytoplasmic-facing.

It belongs to the G-protein coupled receptor T2R family.

It is found in the membrane. In terms of biological role, putative taste receptor which may play a role in the perception of bitterness. The polypeptide is Taste receptor type 2 member 114 (Mus musculus (Mouse)).